A 459-amino-acid chain; its full sequence is MDDTIVSLKSQLLEREREVATLKKKLDQIEKGNSTLPELQEKVTSLSPLRLNTSLNNDDIMRYSRQLLLPELGVKGQIAISNISVLVVGCGGLGCPLAQYLAAAGIGRLGLLDYDVVELSNLHRQVLHTELTQGQPKALSAAQAISRMNSTVQCVPYHLQLSRENAIQLIQQYDIVADCSDNVPTRYLVNDACVLTSRPLVSASALRMEGQLTVYNYRGGPCYRCLYPIPPPPETVTNCSDGGVLGVVPGIMGCLQALEVLKIASGQECSFAQQLLMFDGEQTRFRSIRLRSRQKECVVCGEKPTITELQDYEHFCGSAATDKCRRLHLLSREQRVSVQDYKGILDHSTPHLLLDVRPKVEVDICRLSNSLHIPLASLEDKKPEHITLLKEAISDLQEHLNNQSPVQVFVVCKLGNDSQKAVQLLEKMSGAEVEAMTVKDIGGGLMAWAKKIDYCFPQY.

ATP contacts are provided by residues glycine 92, aspartate 113, 120–124 (SNLHR), lysine 137, and 181–182 (DN). Zn(2+) contacts are provided by cysteine 222 and cysteine 225. Cysteine 239 acts as the Glycyl thioester intermediate; for adenylyltransferase activity in catalysis. Residues cysteine 297 and cysteine 300 each coordinate Zn(2+). A disulfide bridge connects residues cysteine 316 and cysteine 324. The Rhodanese domain maps to 347–457 (HSTPHLLLDV…WAKKIDYCFP (111 aa)). The active-site Cysteine persulfide intermediate; for sulfurtransferase activity is the cysteine 412.

It in the N-terminal section; belongs to the HesA/MoeB/ThiF family. UBA4 subfamily. Zn(2+) serves as cofactor.

The protein resides in the cytoplasm. It localises to the cytosol. It catalyses the reaction [molybdopterin-synthase sulfur-carrier protein]-C-terminal Gly-Gly + ATP + H(+) = [molybdopterin-synthase sulfur-carrier protein]-C-terminal Gly-Gly-AMP + diphosphate. The catalysed reaction is [molybdopterin-synthase sulfur-carrier protein]-C-terminal Gly-Gly-AMP + S-sulfanyl-L-cysteinyl-[cysteine desulfurase] + AH2 = [molybdopterin-synthase sulfur-carrier protein]-C-terminal-Gly-aminoethanethioate + L-cysteinyl-[cysteine desulfurase] + A + AMP + 2 H(+). Its pathway is tRNA modification; 5-methoxycarbonylmethyl-2-thiouridine-tRNA biosynthesis. The protein operates within cofactor biosynthesis; molybdopterin biosynthesis. Its function is as follows. Plays a central role in 2-thiolation of mcm(5)S(2)U at tRNA wobble positions of cytosolic tRNA(Lys), tRNA(Glu) and tRNA(Gln). Also essential during biosynthesis of the molybdenum cofactor. Acts by mediating the C-terminal thiocarboxylation of sulfur carriers urm1 and mocs2a. Its N-terminus first activates urm1 and mocs2a as acyl-adenylates (-COAMP), then the persulfide sulfur on the catalytic cysteine is transferred to urm1 and mocs2a to form thiocarboxylation (-COSH) of their C-terminus. The reaction probably involves hydrogen sulfide that is generated from the persulfide intermediate and that acts as a nucleophile towards urm1 and mocs2a. Subsequently, a transient disulfide bond is formed. Does not use thiosulfate as sulfur donor; nfs1 probably acting as a sulfur donor for thiocarboxylation reactions. The protein is Adenylyltransferase and sulfurtransferase MOCS3 (mocs3) of Danio rerio (Zebrafish).